A 257-amino-acid chain; its full sequence is Ditrans,polycis-undecaprenyl-diphosphate synthase ((2E,6E)-farnesyl-diphosphate specific) (257 aa).

Residue D23 is part of the active site. D23 lines the Mg(2+) pocket. Substrate contacts are provided by residues 24 to 27 (GNGR), W28, R36, H40, and 68 to 70 (SSE). N71 serves as the catalytic Proton acceptor. Substrate is bound by residues W72, R74, R191, and 197-199 (RIS). Residue E210 participates in Mg(2+) binding.

The protein belongs to the UPP synthase family. Homodimer. The cofactor is Mg(2+).

It catalyses the reaction 8 isopentenyl diphosphate + (2E,6E)-farnesyl diphosphate = di-trans,octa-cis-undecaprenyl diphosphate + 8 diphosphate. Its function is as follows. Catalyzes the sequential condensation of isopentenyl diphosphate (IPP) with (2E,6E)-farnesyl diphosphate (E,E-FPP) to yield (2Z,6Z,10Z,14Z,18Z,22Z,26Z,30Z,34E,38E)-undecaprenyl diphosphate (di-trans,octa-cis-UPP). UPP is the precursor of glycosyl carrier lipid in the biosynthesis of bacterial cell wall polysaccharide components such as peptidoglycan and lipopolysaccharide. The chain is Ditrans,polycis-undecaprenyl-diphosphate synthase ((2E,6E)-farnesyl-diphosphate specific) from Xanthomonas axonopodis pv. citri (strain 306).